Here is a 256-residue protein sequence, read N- to C-terminus: uncharacterized protein (256 aa).

Residues 187 to 223 (MEEEEISEVEDALNVLQRLCAQEEGDNKEAETNNNNY) adopt a coiled-coil conformation.

This is an uncharacterized protein from Ostreid herpesvirus 1 (isolate France) (OsHV-1).